Reading from the N-terminus, the 372-residue chain is Caytaxin (372 aa).

Positions 1–58 (MGTTEATLRMENVDVRDEWQDEDLPRPLPEDTGVERLGGAVEDSSSPPSTLNLSGAHR) are disordered. Residues 11 to 29 (ENVDVRDEWQDEDLPRPLP) show a composition bias toward basic and acidic residues. Residues 43 to 53 (DSSSPPSTLNL) are compositionally biased toward polar residues. Position 54 is a phosphoserine (Ser54). A required for interaction with KLC1 region spans residues 115-120 (ELEWED). The region spanning 171–328 (IRPYMKVVTH…CVLQYEEQRL (158 aa)) is the CRAL-TRIO domain. The tract at residues 190–372 (AIIVFAACFL…ATEDQETSMS (183 aa)) is mediates interaction with GLS. The disordered stretch occupies residues 329–372 (RAKRESTRPPQPEFLLPRSEEKPETVEEEDRAAEATEDQETSMS). Over residues 354–372 (VEEEDRAAEATEDQETSMS) the composition is skewed to acidic residues.

As to quaternary structure, interacts with KLC1; may link mitochondria to KLC1 and regulate mitochondria localization into neuron projections. Interacts with GLS; the interaction is direct and may control GLS localization, negatively regulating its activity. Interacts with PIN1 (via WW domain); upon NGF stimulation. The interaction with PIN1 and GLS is competitive. Post-translationally, cleaved by CASP3 and CASP7. The potential C-terminal product released by CASP3 cleavage may inhibit the ERK signaling pathway through MAP2K2. May be ubiquitinated by STUB1. As to expression, neuronal tissues specific. Strongly expressed in brain. Expressed in virtually all parts of the adult brain, including cortex, cerebellum and olfactory bulbs. Enriched in hippocampus, cerebellar cortex, deep cerebellar nuclei, and pontine nuclei (at protein level).

The protein localises to the cell projection. It localises to the axon. It is found in the dendrite. Its subcellular location is the presynapse. The protein resides in the mitochondrion. The protein localises to the growth cone. It localises to the cytoplasm. In terms of biological role, functions in the development of neural tissues, particularly the postnatal maturation of the cerebellar cortex. May play a role in neurotransmission through regulation of glutaminase/GLS, an enzyme responsible for the production in neurons of the glutamate neurotransmitter. Alternatively, may regulate the localization of mitochondria within axons and dendrites. The chain is Caytaxin (Atcay) from Mus musculus (Mouse).